We begin with the raw amino-acid sequence, 1129 residues long: Egg-laying defective protein 27 (1129 aa).

Polar residues predominate over residues methionine 1–glutamate 11. The disordered stretch occupies residues methionine 1–phenylalanine 43. Positions serine 22–serine 33 are enriched in low complexity. A BAH domain is found at threonine 87 to histidine 223. An ELM2 domain is found at tyrosine 224 to aspartate 327. Residues threonine 332–glutamate 384 enclose the SANT domain. Residues proline 388–proline 434 are disordered. Residues leucine 419 to valine 429 are compositionally biased toward acidic residues. The segment at cysteine 439 to cysteine 485 adopts a GATA-type; atypical zinc-finger fold. 5 disordered regions span residues lysine 488–proline 636, arginine 693–aspartate 717, glutamine 790–glutamine 814, methionine 899–alanine 950, and methionine 982–alanine 1040. 2 stretches are compositionally biased toward polar residues: residues proline 525–leucine 545 and valine 561–glutamate 573. Composition is skewed to acidic residues over residues serine 613 to proline 634 and lysine 705 to aspartate 717. Residues methionine 899 to glutamine 914 are compositionally biased toward low complexity. Over residues leucine 915–histidine 932 the composition is skewed to basic and acidic residues. 2 stretches are compositionally biased toward low complexity: residues glutamine 933–alanine 950 and alanine 983–glutamine 999. Residues arginine 1000 to alanine 1040 show a composition bias toward basic and acidic residues.

As to quaternary structure, interacts with ceh-6, sem-4 and sox-2. Interacts with wdr-5.1. Expression detected in anterior intestine and head region.

It is found in the nucleus. Transcription factor which promotes stress survival and delays aging. Required for cell cycle progression and development of the mesodermal and endodermal embryonic lineages. Required for normal T-cell polarity, for correct migration of QL neuroblast descendants and other cells, for embryonic patterning and for the embryonic expression of hlh-8. Also required for the transdifferentiation of the Y rectal epithelial cell to the PDA motor neuron during larval development. The chain is Egg-laying defective protein 27 from Caenorhabditis elegans.